Here is a 445-residue protein sequence, read N- to C-terminus: Tubulin beta chain (445 aa).

GTP-binding residues include Gln11, Glu69, Ser138, Gly142, Thr143, Gly144, Asn204, and Asn226. Glu69 is a binding site for Mg(2+).

Belongs to the tubulin family. As to quaternary structure, dimer of alpha and beta chains. A typical microtubule is a hollow water-filled tube with an outer diameter of 25 nm and an inner diameter of 15 nM. Alpha-beta heterodimers associate head-to-tail to form protofilaments running lengthwise along the microtubule wall with the beta-tubulin subunit facing the microtubule plus end conferring a structural polarity. Microtubules usually have 13 protofilaments but different protofilament numbers can be found in some organisms and specialized cells. Mg(2+) serves as cofactor.

The protein localises to the cytoplasm. Its subcellular location is the cytoskeleton. Functionally, tubulin is the major constituent of microtubules, a cylinder consisting of laterally associated linear protofilaments composed of alpha- and beta-tubulin heterodimers. Microtubules grow by the addition of GTP-tubulin dimers to the microtubule end, where a stabilizing cap forms. Below the cap, tubulin dimers are in GDP-bound state, owing to GTPase activity of alpha-tubulin. This is Tubulin beta chain from Coprinopsis cinerea (strain Okayama-7 / 130 / ATCC MYA-4618 / FGSC 9003) (Inky cap fungus).